We begin with the raw amino-acid sequence, 694 residues long: Follicle-stimulating hormone receptor (694 aa).

An N-terminal signal peptide occupies residues 1-17; the sequence is MAFLWISFLVFLGSGSG. Intrachain disulfides connect Cys-18/Cys-25 and Cys-23/Cys-32. One can recognise an LRRNT domain in the interval 18 to 46; sequence CHHRICHCSDRVFICQESKVTEIPSDIPR. At 18-367 the chain is on the extracellular side; sequence CHHRICHCSD…EDIMGYNFLR (350 aa). LRR repeat units follow at residues 49–72, 73–97, 98–118, 119–143, 144–169, 170–192, 193–216, 217–240, and 241–259; these read VEMR…FRDL, EKIE…LPKL, HEIR…AFWN, LPNL…KIQS, HQKV…AGLS, SESE…AFNG, TQLD…IFQG, ANGP…GLKN, and LKKL…PNLD. Asn-191 and Asn-199 each carry an N-linked (GlcNAc...) asparagine glycan. An N-linked (GlcNAc...) asparagine glycan is attached at Asn-268. 4 disulfides stabilise this stretch: Cys-275-Cys-347, Cys-276-Cys-292, Cys-276-Cys-357, and Cys-292-Cys-339. Asn-293 carries an N-linked (GlcNAc...) asparagine glycan. Tyr-336 is subject to Sulfotyrosine. A helical membrane pass occupies residues 368 to 388; sequence VLIWFISILSITGNIVVLVIL. Residues 389 to 399 lie on the Cytoplasmic side of the membrane; the sequence is ITSQYKLTVPR. A helical transmembrane segment spans residues 400–422; it reads FLMCNLAFADLCIGIYLLLIASV. Residues 423 to 444 lie on the Extracellular side of the membrane; it reads DIHTKSQYHNYAIDWQTGAGCD. Residues Cys-443 and Cys-518 are joined by a disulfide bond. Residues 445–466 traverse the membrane as a helical segment; that stretch reads AAGFFTVFASELSVYTLTAITL. Residues 467-486 lie on the Cytoplasmic side of the membrane; that stretch reads ERWHTITYAMQLDRKVRLRH. Residues 487–509 traverse the membrane as a helical segment; sequence AASIMLIGWIFAFSVALLPIFGV. Residues 510–529 are Extracellular-facing; the sequence is SSYMKVSICLPMDIDSPLSQ. A helical membrane pass occupies residues 530-551; sequence FYVISLLVLNVLASVIICTCYT. The Cytoplasmic portion of the chain corresponds to 552–574; it reads HIYFTVRNPNIISSTSDAKIAKR. The helical transmembrane segment at 575–598 threads the bilayer; that stretch reads MAMLIFTDFLCMAPISFFAISASV. Topologically, residues 599–609 are extracellular; that stretch reads KMPLITVSKSK. Residues 610-631 traverse the membrane as a helical segment; it reads ILLVLFYPINSCANPFLYAVFT. Over 632 to 694 the chain is Cytoplasmic; the sequence is KTFRRDFFIL…YKLVPLNHLS (63 aa).

This sequence belongs to the G-protein coupled receptor 1 family. FSH/LSH/TSH subfamily. Homotrimer. Functions as a homotrimer binding the FSH hormone heterodimer composed of CGA and FSHB. Interacts with ARRB2. Interacts with APPL2; interaction is independent of follicle stimulating hormone stimulation. Post-translationally, N-glycosylated; indirectly required for FSH-binding, possibly via a conformational change that allows high affinity binding of hormone. In terms of processing, sulfated.

Its subcellular location is the cell membrane. G protein-coupled receptor for follitropin, the follicle-stimulating hormone. Through cAMP production activates the downstream PI3K-AKT and ERK1/ERK2 signaling pathways. This Notamacropus eugenii (Tammar wallaby) protein is Follicle-stimulating hormone receptor (FSHR).